Reading from the N-terminus, the 255-residue chain is Probable transcriptional regulatory protein CMS0715 (255 aa).

This sequence belongs to the TACO1 family.

The protein localises to the cytoplasm. The polypeptide is Probable transcriptional regulatory protein CMS0715 (Clavibacter sepedonicus (Clavibacter michiganensis subsp. sepedonicus)).